The sequence spans 212 residues: Large ribosomal subunit protein bL25 (212 aa).

The disordered stretch occupies residues 183–212; sequence HDLPVASIHKPKGAKADDAEGEEGEEGGEE. Over residues 201-212 the composition is skewed to acidic residues; the sequence is AEGEEGEEGGEE.

Belongs to the bacterial ribosomal protein bL25 family. CTC subfamily. Part of the 50S ribosomal subunit; part of the 5S rRNA/L5/L18/L25 subcomplex. Contacts the 5S rRNA. Binds to the 5S rRNA independently of L5 and L18.

This is one of the proteins that binds to the 5S RNA in the ribosome where it forms part of the central protuberance. The protein is Large ribosomal subunit protein bL25 of Marinobacter nauticus (strain ATCC 700491 / DSM 11845 / VT8) (Marinobacter aquaeolei).